Here is a 225-residue protein sequence, read N- to C-terminus: Leucyl/phenylalanyl-tRNA--protein transferase (225 aa).

This sequence belongs to the L/F-transferase family.

It localises to the cytoplasm. The enzyme catalyses N-terminal L-lysyl-[protein] + L-leucyl-tRNA(Leu) = N-terminal L-leucyl-L-lysyl-[protein] + tRNA(Leu) + H(+). It carries out the reaction N-terminal L-arginyl-[protein] + L-leucyl-tRNA(Leu) = N-terminal L-leucyl-L-arginyl-[protein] + tRNA(Leu) + H(+). The catalysed reaction is L-phenylalanyl-tRNA(Phe) + an N-terminal L-alpha-aminoacyl-[protein] = an N-terminal L-phenylalanyl-L-alpha-aminoacyl-[protein] + tRNA(Phe). Functions in the N-end rule pathway of protein degradation where it conjugates Leu, Phe and, less efficiently, Met from aminoacyl-tRNAs to the N-termini of proteins containing an N-terminal arginine or lysine. This chain is Leucyl/phenylalanyl-tRNA--protein transferase, found in Nitrobacter winogradskyi (strain ATCC 25391 / DSM 10237 / CIP 104748 / NCIMB 11846 / Nb-255).